The following is a 114-amino-acid chain: Large ribosomal subunit protein uL22 (114 aa).

Belongs to the universal ribosomal protein uL22 family. As to quaternary structure, part of the 50S ribosomal subunit.

In terms of biological role, this protein binds specifically to 23S rRNA; its binding is stimulated by other ribosomal proteins, e.g. L4, L17, and L20. It is important during the early stages of 50S assembly. It makes multiple contacts with different domains of the 23S rRNA in the assembled 50S subunit and ribosome. The globular domain of the protein is located near the polypeptide exit tunnel on the outside of the subunit, while an extended beta-hairpin is found that lines the wall of the exit tunnel in the center of the 70S ribosome. The chain is Large ribosomal subunit protein uL22 from Myxococcus xanthus (strain DK1622).